Consider the following 1988-residue polypeptide: MAMLPPPGPQSFVHFTKQSLALIEQRIAERKSKEPKEEKKDDDEEAPKPSSDLEAGKQLPFIYGDIPPGMVSEPLEDLDPYYADKKTFIVLNKGKTIFRFNATPALYMLSPFSPLRRISIKILVHSLFSMLIMCTILTNCIFMTMNNPPDWTKNVEYTFTGIYTFESLVKILARGFCVGEFTFLRDPWNWLDFVVIVFAYLTEFVNLGNVSALRTFRVLRALKTISVIPGLKTIVGALIQSVKKLSDVMILTVFCLSVFALIGLQLFMGNLKHKCFRNSLENNETLESIMNTLESEEDFRKYFYYLEGSKDALLCGFSTDSGQCPEGYTCVKIGRNPDYGYTSFDTFSWAFLALFRLMTQDYWENLYQQTLRAAGKTYMIFFVVVIFLGSFYLINLILAVVAMAYEEQNQANIEEAKQKELEFQQMLDRLKKEQEEAEAIAAAAAEYTSIRRSRIMGLSESSSETSKLSSKSAKERRNRRKKKNQKKLSSGEEKGDAEKLSKSESEDSIRRKSFHLGVEGHRRAHEKRLSTPNQSPLSIRGSLFSARRSSRTSLFSFKGRGRDIGSETEFADDEHSIFGDNESRRGSLFVPHRPQERRSSNISQASRSPPMLPVNGKMHSAVDCNGVVSLVDGRSALMLPNGQLLPEVIIDKATSDDSGTTNQIHKKRRCSSYLLSEDMLNDPNLRQRAMSRASILTNTVEELEESRQKCPPWWYRFAHKFLIWNCSPYWIKFKKCIYFIVMDPFVDLAITICIVLNTLFMAMEHHPMTEEFKNVLAIGNLVFTGIFAAEMVLKLIAMDPYEYFQVGWNIFDSLIVTLSLVELFLADVEGLSVLRSFRLLRVFKLAKSWPTLNMLIKIIGNSVGALGNLTLVLAIIVFIFAVVGMQLFGKSYKECVCKINDDCTLPRWHMNDFFHSFLIVFRVLCGEWIETMWDCMEVAGQAMCLIVYMMVMVIGNLVVLNLFLALLLSSFSSDNLTAIEEDPDANNLQIAVTRIKKGINYVKQTLREFILKAFSKKPKISREIRQAEDLNTKKENYISNHTLAEMSKGHNFLKEKDKISGFGSSVDKHLMEDSDGQSFIHNPSLTVTVPIAPGESDLENMNAEELSSDSDSEYSKVRLNRSSSSECSTVDNPLPGEGEEAEAEPMNSDEPEACFTDGCVWRFSCCQVNIESGKGKIWWNIRKTCYKIVEHSWFESFIVLMILLSSGALAFEDIYIERKKTIKIILEYADKIFTYIFILEMLLKWIAYGYKTYFTNAWCWLDFLIVDVSLVTLVANTLGYSDLGPIKSLRTLRALRPLRALSRFEGMRVVVNALIGAIPSIMNVLLVCLIFWLIFSIMGVNLFAGKFYECINTTDGSRFPASQVPNRSECFALMNVSQNVRWKNLKVNFDNVGLGYLSLLQVATFKGWTIIMYAAVDSVNVDKQPKYEYSLYMYIYFVVFIIFGSFFTLNLFIGVIIDNFNQQKKKLGGQDIFMTEEQKKYYNAMKKLGSKKPQKPIPRPGNKIQGCIFDLVTNQAFDISIMVLICLNMVTMMVEKEGQSQHMTEVLYWINVVFIILFTGECVLKLISLRHYYFTVGWNIFDFVVVIISIVGMFLADLIETYFVSPTLFRVIRLARIGRILRLVKGAKGIRTLLFALMMSLPALFNIGLLLFLVMFIYAIFGMSNFAYVKKEDGINDMFNFETFGNSMICLFQITTSAGWDGLLAPILNSKPPDCDPKKVHPGSSVEGDCGNPSVGIFYFVSYIIISFLVVVNMYIAVILENFSVATEESTEPLSEDDFEMFYEVWEKFDPDATQFIEFSKLSDFAAALDPPLLIAKPNKVQLIAMDLPMVSGDRIHCLDILFAFTKRVLGESGEMDSLRSQMEERFMSANPSKVSYEPITTTLKRKQEDVSATVIQRAYRRYRLRQNVKNISSIYIKDGDRDDDLLNKKDMAFDNVNENSSPEKTDATSSTTSPPSYDSVTKPDKEKYEQDRTEKEDKGKDSKESKK.

The Cytoplasmic segment spans residues 1–125 (MAMLPPPGPQ…RRISIKILVH (125 aa)). Positions 26 to 39 (RIAERKSKEPKEEK) are enriched in basic and acidic residues. The interval 26-55 (RIAERKSKEPKEEKKDDDEEAPKPSSDLEA) is disordered. One copy of the I repeat lies at 112-410 (FSPLRRISIK…VAMAYEEQNQ (299 aa)). A helical membrane pass occupies residues 126–145 (SLFSMLIMCTILTNCIFMTM). At 146–150 (NNPPD) the chain is on the extracellular side. Residues 151–172 (WTKNVEYTFTGIYTFESLVKIL) traverse the membrane as a helical segment. Topologically, residues 173-185 (ARGFCVGEFTFLR) are cytoplasmic. A helical membrane pass occupies residues 186 to 204 (DPWNWLDFVVIVFAYLTEF). Residues 205-210 (VNLGNV) are Extracellular-facing. N209 carries an N-linked (GlcNAc...) asparagine glycan. A helical transmembrane segment spans residues 211–227 (SALRTFRVLRALKTISV). Over 228–241 (IPGLKTIVGALIQS) the chain is Cytoplasmic. The chain crosses the membrane as a helical span at residues 242 to 267 (VKKLSDVMILTVFCLSVFALIGLQLF). Residues 268 to 346 (MGNLKHKCFR…PDYGYTSFDT (79 aa)) are Extracellular-facing. C275 and C324 are joined by a disulfide. A glycan (N-linked (GlcNAc...) asparagine) is linked at N283. Residues 347–363 (FSWAFLALFRLMTQDYW) constitute an intramembrane region (pore-forming). At 364–376 (ENLYQQTLRAAGK) the chain is on the extracellular side. Residues 377-402 (TYMIFFVVVIFLGSFYLINLILAVVA) traverse the membrane as a helical segment. Over 403–745 (MAYEEQNQAN…CIYFIVMDPF (343 aa)) the chain is Cytoplasmic. The segment covering 461–471 (SSSETSKLSSK) has biased composition (low complexity). Disordered regions lie at residues 461–543 (SSSE…RGSL) and 565–611 (GSET…SPPM). The segment covering 474–486 (KERRNRRKKKNQK) has biased composition (basic residues). 2 stretches are compositionally biased toward basic and acidic residues: residues 489-510 (SSGEEKGDAEKLSKSESEDSIR) and 573-585 (DEHSIFGDNESRR). The stretch at 726–989 (CSPYWIKFKK…EEDPDANNLQ (264 aa)) is one II repeat. A helical transmembrane segment spans residues 746–762 (VDLAITICIVLNTLFMA). The Extracellular portion of the chain corresponds to 763-771 (MEHHPMTEE). The helical transmembrane segment at 772-796 (FKNVLAIGNLVFTGIFAAEMVLKLI) threads the bilayer. The Cytoplasmic portion of the chain corresponds to 797–805 (AMDPYEYFQ). Residues 806-822 (VGWNIFDSLIVTLSLVE) form a helical membrane-spanning segment. Topologically, residues 823–831 (LFLADVEGL) are extracellular. The helical transmembrane segment at 832 to 848 (SVLRSFRLLRVFKLAKS) threads the bilayer. The Cytoplasmic portion of the chain corresponds to 849 to 865 (WPTLNMLIKIIGNSVGA). A helical transmembrane segment spans residues 866 to 888 (LGNLTLVLAIIVFIFAVVGMQLF). Residues 889–915 (GKSYKECVCKINDDCTLPRWHMNDFFH) lie on the Extracellular side of the membrane. C897 and C903 are disulfide-bonded. The pore-forming intramembrane region spans 916 to 928 (SFLIVFRVLCGEW). The Extracellular segment spans residues 929–940 (IETMWDCMEVAG). C935 and C944 are joined by a disulfide. The helical transmembrane segment at 941–967 (QAMCLIVYMMVMVIGNLVVLNLFLALL) threads the bilayer. Residues 968–1187 (LSSFSSDNLT…WWNIRKTCYK (220 aa)) lie on the Cytoplasmic side of the membrane. The interval 1102–1148 (NAEELSSDSDSEYSKVRLNRSSSSECSTVDNPLPGEGEEAEAEPMNS) is disordered. Positions 1120-1131 (NRSSSSECSTVD) are enriched in polar residues. Residues 1137-1148 (EGEEAEAEPMNS) show a composition bias toward acidic residues. Residues 1180–1488 (NIRKTCYKIV…KKYYNAMKKL (309 aa)) form an III repeat. A helical transmembrane segment spans residues 1188–1212 (IVEHSWFESFIVLMILLSSGALAFE). Topologically, residues 1213 to 1224 (DIYIERKKTIKI) are extracellular. Residues 1225–1250 (ILEYADKIFTYIFILEMLLKWIAYGY) form a helical membrane-spanning segment. Over 1251-1252 (KT) the chain is Cytoplasmic. A helical transmembrane segment spans residues 1253-1278 (YFTNAWCWLDFLIVDVSLVTLVANTL). The Extracellular segment spans residues 1279-1287 (GYSDLGPIK). Residues 1288–1304 (SLRTLRALRPLRALSRF) traverse the membrane as a helical segment. At 1305-1317 (EGMRVVVNALIGA) the chain is on the cytoplasmic side. A helical transmembrane segment spans residues 1318–1342 (IPSIMNVLLVCLIFWLIFSIMGVNL). The Extracellular portion of the chain corresponds to 1343–1394 (FAGKFYECINTTDGSRFPASQVPNRSECFALMNVSQNVRWKNLKVNFDNVGL). A disulfide bridge connects residues C1350 and C1370. N-linked (GlcNAc...) asparagine glycans are attached at residues N1352, N1366, and N1375. The pore-forming intramembrane region spans 1395–1405 (GYLSLLQVATF). At 1406-1431 (KGWTIIMYAAVDSVNVDKQPKYEYSL) the chain is on the extracellular side. Residues 1432 to 1457 (YMYIYFVVFIIFGSFFTLNLFIGVII) traverse the membrane as a helical segment. Over 1458-1514 (DNFNQQKKKLGGQDIFMTEEQKKYYNAMKKLGSKKPQKPIPRPGNKIQGCIFDLVTN) the chain is Cytoplasmic. Phosphoserine; by PKC is present on S1490. The IV repeat unit spans residues 1497–1795 (IPRPGNKIQG…WEKFDPDATQ (299 aa)). Residues 1515–1534 (QAFDISIMVLICLNMVTMMV) traverse the membrane as a helical segment. Residues 1535–1545 (EKEGQSQHMTE) lie on the Extracellular side of the membrane. A helical transmembrane segment spans residues 1546–1567 (VLYWINVVFIILFTGECVLKLI). Residues 1568–1576 (SLRHYYFTV) are Cytoplasmic-facing. The helical transmembrane segment at 1577 to 1598 (GWNIFDFVVVIISIVGMFLADL) threads the bilayer. The Extracellular segment spans residues 1599–1607 (IETYFVSPT). Residues 1608-1627 (LFRVIRLARIGRILRLVKGA) form a helical membrane-spanning segment. The Cytoplasmic portion of the chain corresponds to 1628-1640 (KGIRTLLFALMMS). A helical transmembrane segment spans residues 1641–1663 (LPALFNIGLLLFLVMFIYAIFGM). Topologically, residues 1664–1686 (SNFAYVKKEDGINDMFNFETFGN) are extracellular. The segment at residues 1687 to 1699 (SMICLFQITTSAG) is an intramembrane region (pore-forming). Over 1700–1733 (WDGLLAPILNSKPPDCDPKKVHPGSSVEGDCGNP) the chain is Extracellular. C1715 and C1730 are oxidised to a cystine. Residues 1734-1759 (SVGIFYFVSYIIISFLVVVNMYIAVI) traverse the membrane as a helical segment. Residues 1760–1988 (LENFSVATEE…KGKDSKESKK (229 aa)) are Cytoplasmic-facing. Positions 1889-1918 (EDVSATVIQRAYRRYRLRQNVKNISSIYIK) constitute an IQ domain. Residues 1934-1988 (FDNVNENSSPEKTDATSSTTSPPSYDSVTKPDKEKYEQDRTEKEDKGKDSKESKK) form a disordered region. Over residues 1948–1961 (ATSSTTSPPSYDSV) the composition is skewed to low complexity. A compositionally biased stretch (basic and acidic residues) spans 1962 to 1988 (TKPDKEKYEQDRTEKEDKGKDSKESKK).

It belongs to the sodium channel (TC 1.A.1.10) family. Nav1.7/SCN9A subfamily. As to quaternary structure, the Nav1.7 voltage-gated sodium channel consists of an ion-conducting alpha subunit SCN9A which is functional on its own regulated by one or more beta-1 (SCN1B), beta-2 (SCN2B), beta-3 (SCN3B) and beta-4 (SCN4B) subunits. SCN1B and SCN3B are non-covalently associated with SCN9A. SCN2B and SCN4B are disulfide-linked to SCN9A. SCN1B regulates channel inactivation. Interacts with NEDD4 and NEDD4L; regulates Nav1.7 activity most probably through ubiquitination and subsequent endocytosis. Interacts with TMEM233; modulates the gating properties of NaV1.7. In terms of processing, phosphorylation at Ser-1490 by PKC in a highly conserved cytoplasmic loop increases peak sodium currents. Post-translationally, ubiquitinated by NEDD4L; which may promote its endocytosis. In terms of tissue distribution, expressed strongly in dorsal root ganglion, with only minor levels elsewhere in the body, smooth muscle cells, MTC cell line and C-cell carcinoma. Also expressed in vagus nerves within the head and neck region. Isoform 1 is expressed preferentially in the central and peripheral nervous system. Isoform 2 is expressed preferentially in the dorsal root ganglion.

It localises to the cell membrane. It is found in the cell projection. The protein resides in the neuron projection. The protein localises to the axon. It carries out the reaction Na(+)(in) = Na(+)(out). Its activity is regulated as follows. Inhibited by tetrodotoxin. Weakly inhibited by saxitoxin. Inhibited by the spider huwentoxin-IV that binds the extracellular loop S3-S4 of repeat II. Inhibited by the spider protoxin-II that binds the extracellular loop S3-S4 of repeats II and IV. Inhibited by the scorpion alpha-toxins CvIV4 and AaH2. Inhibited by the conotoxin GVIIJ. Inhibited by the spider beta/delta-theraphotoxin-Pre1a. Its function is as follows. Pore-forming subunit of Nav1.7, a voltage-gated sodium (Nav) channel that directly mediates the depolarizing phase of action potentials in excitable membranes. Navs, also called VGSCs (voltage-gated sodium channels) or VDSCs (voltage-dependent sodium channels), operate by switching between closed and open conformations depending on the voltage difference across the membrane. In the open conformation they allow Na(+) ions to selectively pass through the pore, along their electrochemical gradient. The influx of Na(+) ions provokes membrane depolarization, initiating the propagation of electrical signals throughout cells and tissues. Nav1.7 plays a crucial role in controlling the excitability and action potential propagation from nociceptor neurons, thereby contributing to the sensory perception of pain. The protein is Sodium channel protein type 9 subunit alpha of Homo sapiens (Human).